A 119-amino-acid polypeptide reads, in one-letter code: UPF0231 protein YPTB0717 (119 aa).

This sequence belongs to the UPF0231 family.

The protein is UPF0231 protein YPTB0717 of Yersinia pseudotuberculosis serotype I (strain IP32953).